Reading from the N-terminus, the 87-residue chain is Omega-lycotoxin-Am1g (87 aa).

An N-terminal signal peptide occupies residues 1 to 17 (MKLSIFFVLFFIAIAYC). Positions 18 to 40 (QPEFLDDEEDEVEETLPVAEEGR) are excised as a propeptide. 4 disulfide bridges follow: cysteine 44-cysteine 59, cysteine 51-cysteine 64, cysteine 58-cysteine 84, and cysteine 66-cysteine 82.

This sequence belongs to the neurotoxin omega-lctx family. Expressed by the venom gland.

The protein localises to the secreted. In terms of biological role, modulates Cav2.1/CACNA1A voltage-gated calcium channels (P/Q-type currents) in rat cerebellar Purkinje cells and hippocampal CA1-CA3 neurons. At saturating concentrations (&gt;10 nM) decelerates activation kinetics and slightly increases peak amplitude without affecting deactivation kinetics. In vivo, does not cause death when intravenously injected into mice. In rat models, through its activity on Cav2.1/CACNA1A, has an ameliorative effect on memory defects provoked by hyperstimulation of N-methyl-D-aspartate receptors (NMDARs) in the hippocampus. This Alopecosa marikovskyi (Wolf spider) protein is Omega-lycotoxin-Am1g.